Consider the following 543-residue polypeptide: Alanine aminotransferase 1, mitochondrial (543 aa).

The N-terminal 55 residues, 1–55 (MRRFVIGQAKNLIDQSRRRQLHHHKNLSFVSLIPPFSAPSDSSSRHLSSSSSSDM), are a transit peptide targeting the mitochondrion. Over residues 43–63 (SSRHLSSSSSSDMSASDSSSS) the composition is skewed to low complexity. Positions 43-64 (SSRHLSSSSSSDMSASDSSSSL) are disordered. The residue at position 56 (serine 56) is an N-acetylserine. Pyridoxal 5'-phosphate contacts are provided by residues tyrosine 173, 209-210 (AS), tyrosine 235, asparagine 291, tyrosine 322, and 354-356 (SFQ). At lysine 360 the chain carries N6-(pyridoxal phosphate)lysine. Pyridoxal 5'-phosphate-binding residues include arginine 369 and asparagine 397.

This sequence belongs to the class-I pyridoxal-phosphate-dependent aminotransferase family. Alanine aminotransferase subfamily. In terms of assembly, homodimer. Pyridoxal 5'-phosphate is required as a cofactor. The N-terminus is blocked. As to expression, mostly expressed in roots and shoots, mostly in vascular tissues, and, to a lower extent, in flowers and leaves.

The protein localises to the mitochondrion. It catalyses the reaction L-alanine + 2-oxoglutarate = pyruvate + L-glutamate. It functions in the pathway photosynthesis; C4 acid pathway. Its pathway is amino-acid degradation; L-alanine degradation via transaminase pathway; pyruvate from L-alanine: step 1/1. In terms of biological role, is the major alanine aminotransferase in roots that catalyzes the conversion of alanine to pyruvate. Involved in the rapid conversion of alanine to pyruvate during recovery from low-oxygen stress. This chain is Alanine aminotransferase 1, mitochondrial, found in Arabidopsis thaliana (Mouse-ear cress).